The sequence spans 120 residues: Holo-[acyl-carrier-protein] synthase (120 aa).

Residues Asp8 and Glu58 each contribute to the Mg(2+) site.

It belongs to the P-Pant transferase superfamily. AcpS family. Mg(2+) is required as a cofactor.

It is found in the cytoplasm. It catalyses the reaction apo-[ACP] + CoA = holo-[ACP] + adenosine 3',5'-bisphosphate + H(+). In terms of biological role, transfers the 4'-phosphopantetheine moiety from coenzyme A to a Ser of acyl-carrier-protein. This chain is Holo-[acyl-carrier-protein] synthase, found in Limosilactobacillus reuteri (strain DSM 20016) (Lactobacillus reuteri).